The primary structure comprises 430 residues: Asparagine--tRNA ligase (430 aa).

Belongs to the class-II aminoacyl-tRNA synthetase family. In terms of assembly, homodimer.

It localises to the cytoplasm. It catalyses the reaction tRNA(Asn) + L-asparagine + ATP = L-asparaginyl-tRNA(Asn) + AMP + diphosphate + H(+). This chain is Asparagine--tRNA ligase, found in Pelotomaculum thermopropionicum (strain DSM 13744 / JCM 10971 / SI).